The chain runs to 504 residues: Peptidyl-prolyl cis-trans isomerase-like 4 (504 aa).

The PPIase cyclophilin-type domain occupies Met-1–Ile-169. Residues Asn-246–Ser-324 enclose the RRM domain. Residues Arg-330–Thr-339 show a composition bias toward polar residues. The segment at Arg-330 to Arg-504 is disordered. Over residues Gly-340–Tyr-354 the composition is skewed to gly residues. Basic and acidic residues-rich tracts occupy residues Gly-356–Arg-381 and Ser-416–Arg-504.

This sequence belongs to the cyclophilin-type PPIase family. PPIL4 subfamily.

The protein localises to the nucleus. It carries out the reaction [protein]-peptidylproline (omega=180) = [protein]-peptidylproline (omega=0). Functionally, PPIases accelerate the folding of proteins. It catalyzes the cis-trans isomerization of proline imidic peptide bonds in oligopeptides. The chain is Peptidyl-prolyl cis-trans isomerase-like 4 (CYP6) from Cryptococcus neoformans var. neoformans serotype D (strain B-3501A) (Filobasidiella neoformans).